Reading from the N-terminus, the 663-residue chain is uncharacterized protein (663 aa).

207–214 (GPPGTGKT) is a binding site for ATP.

It belongs to the DNA2/NAM7 helicase family.

This is an uncharacterized protein from Methanocaldococcus jannaschii (strain ATCC 43067 / DSM 2661 / JAL-1 / JCM 10045 / NBRC 100440) (Methanococcus jannaschii).